We begin with the raw amino-acid sequence, 1243 residues long: Serine/threonine-protein kinase/endoribonuclease IRE1 (1243 aa).

Residues 1–35 (MMRRPPSQGRWSASHQKLLLAFAFILIPWLQLADA) form the signal peptide. At 36-585 (QQQPQQPQIR…VKALPQSAAN (550 aa)) the chain is on the lumenal side. Disordered regions lie at residues 70–132 (HAAP…KPNY) and 149–172 (QPVRAPHTSRHHWPSSSAASGLAS). A compositionally biased stretch (basic and acidic residues) spans 73 to 85 (PDVHPEAKFDTVN). The segment covering 90-99 (QQSTASPQQH) has biased composition (polar residues). Positions 163-172 (SSSAASGLAS) are enriched in low complexity. N-linked (GlcNAc...) asparagine glycans are attached at residues Asn-226, Asn-470, and Asn-554. Residues 586 to 606 (SVIDFVSNPILIIFLIGSLIY) form a helical membrane-spanning segment. Topologically, residues 607-1243 (NEKKLRRSYH…FREYYEPAGL (637 aa)) are cytoplasmic. The segment at 638 to 765 (GDESGDDKDG…QSHENDPALT (128 aa)) is disordered. The segment covering 650-660 (PSSPSPRSQPQ) has biased composition (low complexity). The span at 674–693 (ERNAGDQDKVKDNRSLHDVS) shows a compositional bias: basic and acidic residues. Residues 732 to 749 (KKKKAHRGRRGGVKHRKG) are compositionally biased toward basic residues. A Protein kinase domain is found at 809 to 1105 (VDTDVELGMG…SREVMAHPFF (297 aa)). ATP-binding positions include 815-823 (LGMGSNGTV) and Lys-837. ADP-binding residues include Ser-819, Lys-837, Glu-881, and Cys-883. Asp-931 functions as the Proton acceptor in the catalytic mechanism. Mg(2+) contacts are provided by Asn-936 and Asp-953. The 133-residue stretch at 1108–1240 (PKKRLAFLCD…TDRFREYYEP (133 aa)) folds into the KEN domain.

This sequence belongs to the protein kinase superfamily. Ser/Thr protein kinase family. Mg(2+) is required as a cofactor. Post-translationally, autophosphorylated mainly on serine residues; phosphorylation enables nucleotide binding by the active site.

Its subcellular location is the endoplasmic reticulum membrane. It carries out the reaction L-seryl-[protein] + ATP = O-phospho-L-seryl-[protein] + ADP + H(+). The catalysed reaction is L-threonyl-[protein] + ATP = O-phospho-L-threonyl-[protein] + ADP + H(+). Senses unfolded proteins in the lumen of the endoplasmic reticulum via its N-terminal domain which leads to enzyme auto-activation. The active endoribonuclease domain splices precursor mRNAs to produce their mature form which then induces transcription of UPR target genes. The sequence is that of Serine/threonine-protein kinase/endoribonuclease IRE1 from Hypocrea jecorina (strain QM6a) (Trichoderma reesei).